We begin with the raw amino-acid sequence, 397 residues long: ORC1-type DNA replication protein 1 (397 aa).

ATP contacts are provided by residues T67 to A71, Y208, and R220.

This sequence belongs to the CDC6/cdc18 family.

Involved in regulation of DNA replication. The sequence is that of ORC1-type DNA replication protein 1 (cdc6-1) from Sulfolobus acidocaldarius (strain ATCC 33909 / DSM 639 / JCM 8929 / NBRC 15157 / NCIMB 11770).